A 144-amino-acid chain; its full sequence is Universal stress protein F (144 aa).

Belongs to the universal stress protein A family. Homodimer.

The sequence is that of Universal stress protein F (uspF) from Escherichia coli O157:H7.